Consider the following 390-residue polypeptide: MKFVDEAVIRADAGDGGNGTVSFRTEKYVPRGGPDGGDGGDGGDVYLLADENVNTLIDFRFERFHAAERGENGRGGNCTGHRGEDKILTVPVGTRAIDEETGEVIADLTDHGVKVMVSKGGFHGLGNTRFKSSVNRAPRQKSMGSKGEIRHLRLELLLLADVGMLGLPNAGKSTFIRSVSAAKPKVADYPFTTLIPSLGVVRVDAERSFVIADIPGLIEGAADGAGLGIRFLKHLERCRVLLHMIDLLPADGSDPVENAFTIINELDKYSDKLANKPRWLIFNKVDLLSEEDTQAKISEVLEALAWEGDYYCISALTRDGTKELTYNLMTTIESLPQNKYDEIEEKVEKVEFKWDDYHAEQIKKAEEDDDDDDWDNWNEDDYDVEIIYKP.

The 159-residue stretch at methionine 1–leucine 159 folds into the Obg domain. The tract at residues serine 22–glycine 42 is disordered. The span at glycine 33 to glycine 42 shows a compositional bias: gly residues. Residues alanine 160–glutamate 333 form the OBG-type G domain. GTP is bound by residues glycine 166–serine 173, phenylalanine 191–isoleucine 195, aspartate 213–glycine 216, asparagine 283–aspartate 286, and serine 314–leucine 316. 2 residues coordinate Mg(2+): serine 173 and threonine 193.

It belongs to the TRAFAC class OBG-HflX-like GTPase superfamily. OBG GTPase family. In terms of assembly, monomer. It depends on Mg(2+) as a cofactor.

It is found in the cytoplasm. An essential GTPase which binds GTP, GDP and possibly (p)ppGpp with moderate affinity, with high nucleotide exchange rates and a fairly low GTP hydrolysis rate. Plays a role in control of the cell cycle, stress response, ribosome biogenesis and in those bacteria that undergo differentiation, in morphogenesis control. In Photobacterium profundum (strain SS9), this protein is GTPase Obg.